Here is a 438-residue protein sequence, read N- to C-terminus: Transcription termination factor Rho (438 aa).

Residues 70-145 enclose the Rho RNA-BD domain; sequence YILFTGILEI…LKIEAINYLP (76 aa). Residues 188–193, 200–205, and R231 contribute to the ATP site; these read GKGQRA and RTGKTE.

The protein belongs to the Rho family. Homohexamer. The homohexamer assembles into an open ring structure.

In terms of biological role, facilitates transcription termination by a mechanism that involves Rho binding to the nascent RNA, activation of Rho's RNA-dependent ATPase activity, and release of the mRNA from the DNA template. In Helicobacter pylori (strain J99 / ATCC 700824) (Campylobacter pylori J99), this protein is Transcription termination factor Rho.